The chain runs to 338 residues: S-adenosylmethionine:tRNA ribosyltransferase-isomerase (338 aa).

This sequence belongs to the QueA family. As to quaternary structure, monomer.

Its subcellular location is the cytoplasm. It catalyses the reaction 7-aminomethyl-7-carbaguanosine(34) in tRNA + S-adenosyl-L-methionine = epoxyqueuosine(34) in tRNA + adenine + L-methionine + 2 H(+). Its pathway is tRNA modification; tRNA-queuosine biosynthesis. Transfers and isomerizes the ribose moiety from AdoMet to the 7-aminomethyl group of 7-deazaguanine (preQ1-tRNA) to give epoxyqueuosine (oQ-tRNA). The chain is S-adenosylmethionine:tRNA ribosyltransferase-isomerase from Francisella philomiragia subsp. philomiragia (strain ATCC 25017 / CCUG 19701 / FSC 153 / O#319-036).